The chain runs to 300 residues: GTPase Era (300 aa).

The Era-type G domain maps to Lys-4–Glu-172. Residues Gly-12–Ser-19 form a G1 region. Residue Gly-12–Ser-19 participates in GTP binding. The interval Gln-38–Asn-42 is G2. A G3 region spans residues Asp-59–Gly-62. GTP contacts are provided by residues Asp-59–Ile-63 and Asn-121–Asp-124. Residues Asn-121–Asp-124 form a G4 region. Residues Ile-151–Ala-153 are G5. A KH type-2 domain is found at Ile-195–Glu-280.

This sequence belongs to the TRAFAC class TrmE-Era-EngA-EngB-Septin-like GTPase superfamily. Era GTPase family. Monomer.

Its subcellular location is the cytoplasm. It is found in the cell inner membrane. In terms of biological role, an essential GTPase that binds both GDP and GTP, with rapid nucleotide exchange. Plays a role in 16S rRNA processing and 30S ribosomal subunit biogenesis and possibly also in cell cycle regulation and energy metabolism. This Thermotoga petrophila (strain ATCC BAA-488 / DSM 13995 / JCM 10881 / RKU-1) protein is GTPase Era.